Here is a 247-residue protein sequence, read N- to C-terminus: tRNA pseudouridine synthase A (247 aa).

Asp52 functions as the Nucleophile in the catalytic mechanism. Tyr110 lines the substrate pocket.

Belongs to the tRNA pseudouridine synthase TruA family. As to quaternary structure, homodimer.

It catalyses the reaction uridine(38/39/40) in tRNA = pseudouridine(38/39/40) in tRNA. Its function is as follows. Formation of pseudouridine at positions 38, 39 and 40 in the anticodon stem and loop of transfer RNAs. The sequence is that of tRNA pseudouridine synthase A from Geobacter sp. (strain M21).